The following is a 342-amino-acid chain: L-threonine 3-dehydrogenase (342 aa).

Cys-38 serves as a coordination point for Zn(2+). Residues Thr-40 and His-43 each act as charge relay system in the active site. Zn(2+) is bound by residues His-63, Glu-64, Cys-93, Cys-96, Cys-99, and Cys-107. Residues Ile-175, Asp-195, Arg-200, 262 to 264, and 286 to 287 each bind NAD(+); these read LGI and IY.

This sequence belongs to the zinc-containing alcohol dehydrogenase family. As to quaternary structure, homotetramer. Requires Zn(2+) as cofactor.

The protein localises to the cytoplasm. It carries out the reaction L-threonine + NAD(+) = (2S)-2-amino-3-oxobutanoate + NADH + H(+). The protein operates within amino-acid degradation; L-threonine degradation via oxydo-reductase pathway; glycine from L-threonine: step 1/2. Catalyzes the NAD(+)-dependent oxidation of L-threonine to 2-amino-3-ketobutyrate. The protein is L-threonine 3-dehydrogenase of Burkholderia cenocepacia (strain HI2424).